Here is a 106-residue protein sequence, read N- to C-terminus: Molt-inhibiting hormone (106 aa).

The N-terminal stretch at 1-29 is a signal peptide; the sequence is MVNQVAQCFTVRRVWLVVVVGLLVHQTTA. 3 disulfide bridges follow: Cys-36-Cys-73, Cys-53-Cys-69, and Cys-56-Cys-82. An Alanine amide modification is found at Ala-104. Positions 105-106 are excised as a propeptide; it reads GR.

In terms of tissue distribution, sinus gland of the eyestalk.

It is found in the secreted. Functionally, inhibits Y-organs where molting hormone (ecdysteroid) is secreted. A molting cycle is initiated when MIH secretion diminishes or stops. This Faxonius limosus (Spinycheek crayfish) protein is Molt-inhibiting hormone.